Reading from the N-terminus, the 847-residue chain is Alanine--tRNA ligase (847 aa).

4 residues coordinate Zn(2+): His-554, His-558, Cys-656, and His-660.

Belongs to the class-II aminoacyl-tRNA synthetase family. Requires Zn(2+) as cofactor.

It is found in the cytoplasm. The enzyme catalyses tRNA(Ala) + L-alanine + ATP = L-alanyl-tRNA(Ala) + AMP + diphosphate. Its function is as follows. Catalyzes the attachment of alanine to tRNA(Ala) in a two-step reaction: alanine is first activated by ATP to form Ala-AMP and then transferred to the acceptor end of tRNA(Ala). Also edits incorrectly charged Ser-tRNA(Ala) and Gly-tRNA(Ala) via its editing domain. This chain is Alanine--tRNA ligase, found in Helicobacter acinonychis (strain Sheeba).